A 289-amino-acid chain; its full sequence is MPVVRKIFRRRRGDSESEEDEQDSEEVRLKLEETREVQNLRKRPNGVSAVALLVGEKVQEETTLVDDPFQMKTGGMVDMKKLKERGKDKISEEEDLHLGTSFSAETNRRDEDADMMKYIETELKKRKGIVEHEEQKVKPKNAEDCLYELPENIRVSSAKKTEEMLSNQMLSGIPEVDLGIDAKIKNIISTEDAKARLLAEQQNKKKDSETSFVPTNMAVNYVQHNRFYHEELNAPIRRNKEEPKARPLRVGDTEKPEPERSPPNRKRPANEKATDDYHYEKFKKMNRRY.

A compositionally biased stretch (basic residues) spans 1–12 (MPVVRKIFRRRR). The disordered stretch occupies residues 1–27 (MPVVRKIFRRRRGDSESEEDEQDSEEV). Residues 5 to 58 (RKIFRRRRGDSESEEDEQDSEEVRLKLEETREVQNLRKRPNGVSAVALLVGEKV) form an interaction with SNRNP200 region. A phosphoserine mark is found at S15 and S17. Phosphotyrosine is present on Y147. Residues 232–283 (LNAPIRRNKEEPKARPLRVGDTEKPEPERSPPNRKRPANEKATDDYHYEKFK) show a composition bias toward basic and acidic residues. Residues 232-289 (LNAPIRRNKEEPKARPLRVGDTEKPEPERSPPNRKRPANEKATDDYHYEKFKKMNRRY) form a disordered region. A Phosphothreonine modification is found at T253. Phosphoserine is present on S261.

It belongs to the TLS1 family. Component of the spliceosome. Interacts with SNRNP200; the interaction is direct. Interacts with PRPF8.

Its subcellular location is the nucleus. It is found in the chromosome. It localises to the centromere. Functionally, plays a role in pre-mRNA splicing by promoting usage of the upstream 3'-splice site at alternative NAGNAG splice sites; these are sites featuring alternative acceptor motifs separated by only a few nucleotides. May also modulate exon inclusion events. Plays a role in spliceosomal remodeling by displacing WBP4 from SNRNP200 and may act to inhibit SNRNP200 helicase activity. Binds U5 snRNA. Required for proper chromosome segregation. Not required for splicing of shelterin components. This Homo sapiens (Human) protein is Splicing factor C9orf78 (C9orf78).